A 372-amino-acid chain; its full sequence is GRASP65 homolog protein 1 (372 aa).

The residue at position 1 (Met-1) is an N-acetylmethionine. PDZ GRASP-type domains lie at 66 to 183 and 188 to 276; these read SGLR…WTPL and FTYH…YGFL. The tract at residues 66–292 is GRASP; it reads SGLRIVWVDE…KHCPQQAQQQ (227 aa). At Ser-155 the chain carries Phosphoserine. The disordered stretch occupies residues 312 to 372; it reads VPSAFTAPPV…PPPQKQSSSD (61 aa).

In terms of assembly, homodimer. Interacts with BUG1 (via C-terminus), probably forming a heterooligomer consisting of a GRH1 dimer and a BUG1 dimer. Interacts with COPII coat components SEC23, SEC24, SFB2 and SFB3. Post-translationally, N-terminal acetylation; by N-terminal acetyltransferase NatC.

It is found in the cytoplasm. The protein localises to the golgi apparatus. It localises to the cis-Golgi network membrane. Functionally, involved in the spindle assembly checkpoint. Involved in ER to Golgi vesicle-mediated transport by either facilitating USO1-dependent and -independent tethering or increasing target accuracy of fusion events of COPII-coated vesicles. The protein is GRASP65 homolog protein 1 (GRH1) of Saccharomyces cerevisiae (strain ATCC 204508 / S288c) (Baker's yeast).